Consider the following 338-residue polypeptide: Anthranilate phosphoribosyltransferase (338 aa).

5-phospho-alpha-D-ribose 1-diphosphate-binding positions include glycine 81, 84–85 (GD), threonine 89, 91–94 (NIST), 109–117 (KHGNRSMVS), and serine 121. Residue glycine 81 participates in anthranilate binding. Residue serine 93 participates in Mg(2+) binding. Position 112 (asparagine 112) interacts with anthranilate. Arginine 167 lines the anthranilate pocket. Residues aspartate 226 and glutamate 227 each coordinate Mg(2+).

It belongs to the anthranilate phosphoribosyltransferase family. Homodimer. It depends on Mg(2+) as a cofactor.

The catalysed reaction is N-(5-phospho-beta-D-ribosyl)anthranilate + diphosphate = 5-phospho-alpha-D-ribose 1-diphosphate + anthranilate. It functions in the pathway amino-acid biosynthesis; L-tryptophan biosynthesis; L-tryptophan from chorismate: step 2/5. Functionally, catalyzes the transfer of the phosphoribosyl group of 5-phosphorylribose-1-pyrophosphate (PRPP) to anthranilate to yield N-(5'-phosphoribosyl)-anthranilate (PRA). The protein is Anthranilate phosphoribosyltransferase of Acidithiobacillus ferrooxidans (strain ATCC 23270 / DSM 14882 / CIP 104768 / NCIMB 8455) (Ferrobacillus ferrooxidans (strain ATCC 23270)).